A 95-amino-acid polypeptide reads, in one-letter code: Sec-independent protein translocase protein TatA (95 aa).

Residues 1-21 (MFGRLGAPEIILILVVIILLF) form a helical membrane-spanning segment. A compositionally biased stretch (basic and acidic residues) spans 44–55 (AKAMKSEAKADD). The segment at 44-95 (AKAMKSEAKADDAAPADPPNPEQSAAQRTIQAAPGDVTSSRPVTEPTDTTKR) is disordered.

It belongs to the TatA/E family. In terms of assembly, the Tat system comprises two distinct complexes: a TatABC complex, containing multiple copies of TatA, TatB and TatC subunits, and a separate TatA complex, containing only TatA subunits. Substrates initially bind to the TatABC complex, which probably triggers association of the separate TatA complex to form the active translocon.

The protein localises to the cell membrane. Its function is as follows. Part of the twin-arginine translocation (Tat) system that transports large folded proteins containing a characteristic twin-arginine motif in their signal peptide across membranes. TatA could form the protein-conducting channel of the Tat system. In Streptomyces coelicolor (strain ATCC BAA-471 / A3(2) / M145), this protein is Sec-independent protein translocase protein TatA.